The following is a 498-amino-acid chain: ATP synthase subunit beta, chloroplastic (498 aa).

An ATP-binding site is contributed by 172-179 (GGAGVGKT).

Belongs to the ATPase alpha/beta chains family. In terms of assembly, F-type ATPases have 2 components, CF(1) - the catalytic core - and CF(0) - the membrane proton channel. CF(1) has five subunits: alpha(3), beta(3), gamma(1), delta(1), epsilon(1). CF(0) has four main subunits: a(1), b(1), b'(1) and c(9-12).

It is found in the plastid. It localises to the chloroplast thylakoid membrane. The enzyme catalyses ATP + H2O + 4 H(+)(in) = ADP + phosphate + 5 H(+)(out). Its function is as follows. Produces ATP from ADP in the presence of a proton gradient across the membrane. The catalytic sites are hosted primarily by the beta subunits. In Nicotiana rustica (Aztec tobacco), this protein is ATP synthase subunit beta, chloroplastic.